The following is a 955-amino-acid chain: UvrABC system protein A (955 aa).

Position 35–42 (35–42 (GLSGSGKS)) interacts with ATP. ABC transporter domains are found at residues 322 to 601 (WGST…EESI) and 621 to 951 (GHDN…RYLK). An ATP-binding site is contributed by 654 to 661 (GVSGSGKS). The C4-type zinc-finger motif lies at 754 to 780 (CEACQGDGLIKIEMHFLPDVYVKCDIC).

It belongs to the ABC transporter superfamily. UvrA family. Forms a heterotetramer with UvrB during the search for lesions.

It is found in the cytoplasm. Functionally, the UvrABC repair system catalyzes the recognition and processing of DNA lesions. UvrA is an ATPase and a DNA-binding protein. A damage recognition complex composed of 2 UvrA and 2 UvrB subunits scans DNA for abnormalities. When the presence of a lesion has been verified by UvrB, the UvrA molecules dissociate. The polypeptide is UvrABC system protein A (Rickettsia felis (strain ATCC VR-1525 / URRWXCal2) (Rickettsia azadi)).